The chain runs to 465 residues: RuvB-like helicase 2 (465 aa).

72 to 79 contacts ATP; sequence GPPSTGKT.

This sequence belongs to the RuvB family. As to quaternary structure, may form heterododecamers with RVB1. Component of the SWR1 chromatin remodeling complex, the INO80 chromatin remodeling complex, and of the R2TP complex. Interacts with dil1.

Its subcellular location is the nucleus. The catalysed reaction is ATP + H2O = ADP + phosphate + H(+). Functionally, DNA helicase which participates in several chromatin remodeling complexes, including the SWR1 and the INO80 complexes. The SWR1 complex mediates the ATP-dependent exchange of histone H2A for the H2A variant HZT1 leading to transcriptional regulation of selected genes by chromatin remodeling. The INO80 complex remodels chromatin by shifting nucleosomes and is involved in DNA repair. Also involved in pre-rRNA processing. In Schizosaccharomyces pombe (strain 972 / ATCC 24843) (Fission yeast), this protein is RuvB-like helicase 2 (rvb2).